A 567-amino-acid chain; its full sequence is Cytochrome P450 monooxygenase 69 (567 aa).

A helical membrane pass occupies residues 7-24 (ELAALTVVLLATGVLFYA). 4 N-linked (GlcNAc...) asparagine glycosylation sites follow: Asn25, Asn81, Asn223, and Asn279. Position 475 (Cys475) interacts with heme.

It belongs to the cytochrome P450 family. Heme serves as cofactor.

The protein resides in the membrane. Its pathway is secondary metabolite biosynthesis. Its function is as follows. Cytochrome P450 monooxygenase that is able to use 4-ethoxybenzoic acid as a substrate for oxidation. This is Cytochrome P450 monooxygenase 69 from Postia placenta (strain ATCC 44394 / Madison 698-R) (Brown rot fungus).